Consider the following 181-residue polypeptide: Probable pyruvoyl-dependent arginine decarboxylase (181 aa).

The residue at position 43 (Ser43) is a Pyruvic acid (Ser).

Belongs to the PdaD family. Pyruvate serves as cofactor.

The enzyme catalyses L-arginine + H(+) = agmatine + CO2. The protein is Probable pyruvoyl-dependent arginine decarboxylase of Chlorobium limicola (strain DSM 245 / NBRC 103803 / 6330).